Here is a 346-residue protein sequence, read N- to C-terminus: Phosphoribosylformylglycinamidine cyclo-ligase (346 aa).

It belongs to the AIR synthase family.

It is found in the cytoplasm. It carries out the reaction 2-formamido-N(1)-(5-O-phospho-beta-D-ribosyl)acetamidine + ATP = 5-amino-1-(5-phospho-beta-D-ribosyl)imidazole + ADP + phosphate + H(+). It functions in the pathway purine metabolism; IMP biosynthesis via de novo pathway; 5-amino-1-(5-phospho-D-ribosyl)imidazole from N(2)-formyl-N(1)-(5-phospho-D-ribosyl)glycinamide: step 2/2. The chain is Phosphoribosylformylglycinamidine cyclo-ligase from Vibrio vulnificus (strain YJ016).